We begin with the raw amino-acid sequence, 441 residues long: Glutamate-1-semialdehyde 2,1-aminomutase (441 aa).

Position 279 is an N6-(pyridoxal phosphate)lysine (Lys-279).

Belongs to the class-III pyridoxal-phosphate-dependent aminotransferase family. HemL subfamily. In terms of assembly, homodimer. It depends on pyridoxal 5'-phosphate as a cofactor.

The protein localises to the cytoplasm. The enzyme catalyses (S)-4-amino-5-oxopentanoate = 5-aminolevulinate. It participates in porphyrin-containing compound metabolism; protoporphyrin-IX biosynthesis; 5-aminolevulinate from L-glutamyl-tRNA(Glu): step 2/2. The sequence is that of Glutamate-1-semialdehyde 2,1-aminomutase from Leptospira borgpetersenii serovar Hardjo-bovis (strain JB197).